Here is a 119-residue protein sequence, read N- to C-terminus: MPRVKRGVTARARHKKVLKLAKGYYGARSRTYRVAKQAVTKAGQYAYRDRRQKKRQFRQLWIARINAASRQNGLSYSRFINGLKKASIEIDRKILADIAVFDKVVFTTLVEKAKEALAK.

Belongs to the bacterial ribosomal protein bL20 family.

Functionally, binds directly to 23S ribosomal RNA and is necessary for the in vitro assembly process of the 50S ribosomal subunit. It is not involved in the protein synthesizing functions of that subunit. The chain is Large ribosomal subunit protein bL20 from Shewanella sediminis (strain HAW-EB3).